The chain runs to 494 residues: Ketol-acid reductoisomerase (NADP(+)) (494 aa).

Residues L14–S208 enclose the KARI N-terminal Rossmann domain. NADP(+) contacts are provided by residues C45–Q48, R68, R76, S78, and D108–Q110. Residue H132 is part of the active site. G158 is a binding site for NADP(+). KARI C-terminal knotted domains lie at S209–A344 and S345–M487. Mg(2+) is bound by residues D217, E221, E389, and E393. S414 provides a ligand contact to substrate.

The protein belongs to the ketol-acid reductoisomerase family. Mg(2+) serves as cofactor.

The catalysed reaction is (2R)-2,3-dihydroxy-3-methylbutanoate + NADP(+) = (2S)-2-acetolactate + NADPH + H(+). It catalyses the reaction (2R,3R)-2,3-dihydroxy-3-methylpentanoate + NADP(+) = (S)-2-ethyl-2-hydroxy-3-oxobutanoate + NADPH + H(+). It participates in amino-acid biosynthesis; L-isoleucine biosynthesis; L-isoleucine from 2-oxobutanoate: step 2/4. It functions in the pathway amino-acid biosynthesis; L-valine biosynthesis; L-valine from pyruvate: step 2/4. Functionally, involved in the biosynthesis of branched-chain amino acids (BCAA). Catalyzes an alkyl-migration followed by a ketol-acid reduction of (S)-2-acetolactate (S2AL) to yield (R)-2,3-dihydroxy-isovalerate. In the isomerase reaction, S2AL is rearranged via a Mg-dependent methyl migration to produce 3-hydroxy-3-methyl-2-ketobutyrate (HMKB). In the reductase reaction, this 2-ketoacid undergoes a metal-dependent reduction by NADPH to yield (R)-2,3-dihydroxy-isovalerate. This is Ketol-acid reductoisomerase (NADP(+)) from Vibrio atlanticus (strain LGP32) (Vibrio splendidus (strain Mel32)).